Here is a 72-residue protein sequence, read N- to C-terminus: MLSMSKAVKARAHTWYTIDMEKGVFRFNKRLCPRCGSVMAYHKEPVPRWHCGKCGYTIFESQAPRQRPSRGR.

Residues C32, C35, C51, and C54 each coordinate Zn(2+). The segment at 32–54 adopts a C4-type zinc-finger fold; sequence CPRCGSVMAYHKEPVPRWHCGKC.

Belongs to the eukaryotic ribosomal protein eS31 family. As to quaternary structure, part of the 30S ribosomal subunit. Zn(2+) is required as a cofactor.

The protein is Small ribosomal subunit protein eS31 of Caldivirga maquilingensis (strain ATCC 700844 / DSM 13496 / JCM 10307 / IC-167).